The primary structure comprises 751 residues: Photosystem I P700 chlorophyll a apoprotein A1 (751 aa).

The next 8 membrane-spanning stretches (helical) occupy residues 73–96 (IFSA…FHGA), 159–182 (LYCT…FHYH), 198–222 (MNHH…HLSL), 294–312 (TAHH…GHMY), 349–372 (WHAQ…HHMY), 388–414 (LSLF…IFMV), 435–457 (AIVS…LYIH), and 532–550 (FLVH…LILV). Residues Cys574 and Cys583 each coordinate [4Fe-4S] cluster. A run of 2 helical transmembrane segments spans residues 590-611 (HVFL…HFSW) and 665-687 (LSAY…MFLF). His676 is a binding site for chlorophyll a'. Residues Met684 and Tyr692 each contribute to the chlorophyll a site. Position 693 (Trp693) interacts with phylloquinone. A helical transmembrane segment spans residues 725–745 (AVGVAHYLLGGIGTTWAFFLA).

This sequence belongs to the PsaA/PsaB family. As to quaternary structure, the PsaA/B heterodimer binds the P700 chlorophyll special pair and subsequent electron acceptors. PSI consists of a core antenna complex that captures photons, and an electron transfer chain that converts photonic excitation into a charge separation. The eukaryotic PSI reaction center is composed of at least 11 subunits. It depends on P700 is a chlorophyll a/chlorophyll a' dimer, A0 is one or more chlorophyll a, A1 is one or both phylloquinones and FX is a shared 4Fe-4S iron-sulfur center. as a cofactor.

The protein localises to the plastid. It localises to the chloroplast thylakoid membrane. The catalysed reaction is reduced [plastocyanin] + hnu + oxidized [2Fe-2S]-[ferredoxin] = oxidized [plastocyanin] + reduced [2Fe-2S]-[ferredoxin]. PsaA and PsaB bind P700, the primary electron donor of photosystem I (PSI), as well as the electron acceptors A0, A1 and FX. PSI is a plastocyanin/cytochrome c6-ferredoxin oxidoreductase, converting photonic excitation into a charge separation, which transfers an electron from the donor P700 chlorophyll pair to the spectroscopically characterized acceptors A0, A1, FX, FA and FB in turn. Oxidized P700 is reduced on the lumenal side of the thylakoid membrane by plastocyanin or cytochrome c6. In Pyropia yezoensis (Susabi-nori), this protein is Photosystem I P700 chlorophyll a apoprotein A1.